Consider the following 215-residue polypeptide: Adenylate kinase (215 aa).

Residue glycine 10–threonine 15 coordinates ATP. Residues serine 30–valine 59 form an NMP region. AMP is bound by residues threonine 31, arginine 36, glycine 57–valine 59, glycine 85–arginine 88, and glutamine 92. The segment at glycine 122–aspartate 159 is LID. ATP contacts are provided by residues arginine 123 and valine 132 to tyrosine 133. AMP contacts are provided by arginine 156 and arginine 167. Glycine 201 contributes to the ATP binding site.

It belongs to the adenylate kinase family. Monomer.

The protein resides in the cytoplasm. It catalyses the reaction AMP + ATP = 2 ADP. It participates in purine metabolism; AMP biosynthesis via salvage pathway; AMP from ADP: step 1/1. Catalyzes the reversible transfer of the terminal phosphate group between ATP and AMP. Plays an important role in cellular energy homeostasis and in adenine nucleotide metabolism. The sequence is that of Adenylate kinase from Azotobacter vinelandii (strain DJ / ATCC BAA-1303).